Reading from the N-terminus, the 381-residue chain is Alkanesulfonate monooxygenase (381 aa).

Belongs to the SsuD family. Homotetramer.

The enzyme catalyses an alkanesulfonate + FMNH2 + O2 = an aldehyde + FMN + sulfite + H2O + 2 H(+). Its function is as follows. Catalyzes the desulfonation of aliphatic sulfonates. This Escherichia coli O17:K52:H18 (strain UMN026 / ExPEC) protein is Alkanesulfonate monooxygenase.